A 753-amino-acid polypeptide reads, in one-letter code: 5-methyltetrahydropteroyltriglutamate--homocysteine methyltransferase (753 aa).

Residues 17–20 and Lys-117 each bind 5-methyltetrahydropteroyltri-L-glutamate; that span reads RELK. Residues 431–433 and Glu-484 each bind L-homocysteine; that span reads IGS. L-methionine contacts are provided by residues 431-433 and Glu-484; that span reads IGS. Residues 515–516 and Trp-561 contribute to the 5-methyltetrahydropteroyltri-L-glutamate site; that span reads RC. Residue Asp-599 coordinates L-homocysteine. Asp-599 is a binding site for L-methionine. Glu-605 serves as a coordination point for 5-methyltetrahydropteroyltri-L-glutamate. 3 residues coordinate Zn(2+): His-641, Cys-643, and Glu-665. His-694 (proton donor) is an active-site residue. Zn(2+) is bound at residue Cys-726.

This sequence belongs to the vitamin-B12 independent methionine synthase family. Zn(2+) serves as cofactor.

The catalysed reaction is 5-methyltetrahydropteroyltri-L-glutamate + L-homocysteine = tetrahydropteroyltri-L-glutamate + L-methionine. The protein operates within amino-acid biosynthesis; L-methionine biosynthesis via de novo pathway; L-methionine from L-homocysteine (MetE route): step 1/1. Functionally, catalyzes the transfer of a methyl group from 5-methyltetrahydrofolate to homocysteine resulting in methionine formation. This Escherichia coli O157:H7 protein is 5-methyltetrahydropteroyltriglutamate--homocysteine methyltransferase.